The sequence spans 67 residues: Alpha-conotoxin-like Qc1.1a (67 aa).

Residues 1–21 (MGMRMMFTMFLLVVLAITVVS) form the signal peptide. Positions 22–46 (FTSDHASDGRNTAANDKASNLMALR) are excised as a propeptide. 2 disulfides stabilise this stretch: C49–C55 and C50–C63. The interval 51-53 (PDP) is lacks the Ser-Xaa-Pro motif that is crucial for potent interaction with nAChR.

The protein belongs to the conotoxin A superfamily. Expressed by the venom duct.

Its subcellular location is the secreted. Its function is as follows. Alpha-conotoxins act on postsynaptic membranes, they bind to the nicotinic acetylcholine receptors (nAChR) and thus inhibit them. Has possibly a distinct nAChR binding mode from other alpha-conotoxins, due to a different three residue motif (lacks the Ser-Xaa-Pro motif). This chain is Alpha-conotoxin-like Qc1.1a, found in Conus quercinus (Oak cone).